An 879-amino-acid polypeptide reads, in one-letter code: Phosphoinositide 3-kinase regulatory subunit 5 (879 aa).

Residues Ser-23 to Leu-100 are heterodimerization. Disordered regions lie at residues Ser-314–Asp-345 and Ser-570–Ser-590. A compositionally biased stretch (acidic residues) spans Leu-315–Glu-336. Over residues Ser-570–Pro-589 the composition is skewed to polar residues. The tract at residues Pro-651–Ser-751 is interaction with beta-gamma G protein dimers.

In terms of assembly, heterodimer. Interacts with a catalytic subunit and with beta-gamma G protein dimers.

The protein localises to the nucleus. The protein resides in the cytoplasm. It is found in the cell membrane. Its activity is regulated as follows. Greatly activated by G gamma proteins. Regulatory subunit of the PI3K gamma complex. Required for recruitment of the catalytic subunit to the plasma membrane via interaction with beta-gamma G protein dimers. Required for G protein-mediated activation of PIK3CG. This chain is Phosphoinositide 3-kinase regulatory subunit 5 (pik3r5), found in Xenopus laevis (African clawed frog).